Here is a 389-residue protein sequence, read N- to C-terminus: Succinate--CoA ligase [ADP-forming] subunit beta (389 aa).

The region spanning 9 to 244 (KQLFEHYGLP…LTQNDAREAE (236 aa)) is the ATP-grasp domain. Residues Lys46, 53-55 (GRG), Glu99, Cys102, and Glu107 contribute to the ATP site. Residues Asn199 and Asp213 each coordinate Mg(2+). Substrate contacts are provided by residues Asn264 and 321–323 (GIV).

The protein belongs to the succinate/malate CoA ligase beta subunit family. In terms of assembly, heterotetramer of two alpha and two beta subunits. Mg(2+) is required as a cofactor.

It catalyses the reaction succinate + ATP + CoA = succinyl-CoA + ADP + phosphate. It carries out the reaction GTP + succinate + CoA = succinyl-CoA + GDP + phosphate. It participates in carbohydrate metabolism; tricarboxylic acid cycle; succinate from succinyl-CoA (ligase route): step 1/1. Succinyl-CoA synthetase functions in the citric acid cycle (TCA), coupling the hydrolysis of succinyl-CoA to the synthesis of either ATP or GTP and thus represents the only step of substrate-level phosphorylation in the TCA. The beta subunit provides nucleotide specificity of the enzyme and binds the substrate succinate, while the binding sites for coenzyme A and phosphate are found in the alpha subunit. The protein is Succinate--CoA ligase [ADP-forming] subunit beta of Haemophilus influenzae (strain ATCC 51907 / DSM 11121 / KW20 / Rd).